The following is a 224-amino-acid chain: Uracil-DNA glycosylase 2 (224 aa).

Catalysis depends on aspartate 64, which acts as the Proton acceptor.

It belongs to the uracil-DNA glycosylase (UDG) superfamily. UNG family.

The protein resides in the cytoplasm. It carries out the reaction Hydrolyzes single-stranded DNA or mismatched double-stranded DNA and polynucleotides, releasing free uracil.. Its function is as follows. Excises uracil residues from the DNA which can arise as a result of misincorporation of dUMP residues by DNA polymerase or due to deamination of cytosine. This Listeria monocytogenes serotype 4b (strain F2365) protein is Uracil-DNA glycosylase 2.